We begin with the raw amino-acid sequence, 353 residues long: 2-oxoglutarate-Fe(II) type oxidoreductase ppzD (353 aa).

The Fe2OG dioxygenase domain maps to 181 to 292 (NTSELRLNHY…RYSVAYFGKP (112 aa)). Residues histidine 208, aspartate 210, and histidine 268 each coordinate Fe cation. Arginine 283 lines the 2-oxoglutarate pocket.

Belongs to the iron/ascorbate-dependent oxidoreductase family. Requires Fe(2+) as cofactor.

It carries out the reaction L-proline + 2-oxoglutarate + O2 = trans-4-hydroxy-L-proline + succinate + CO2. It catalyses the reaction L-proline + 2-oxoglutarate + O2 = trans-3-hydroxy-L-proline + succinate + CO2. The enzyme catalyses D-proline + 2-oxoglutarate + O2 = cis-4-hydroxy-D-proline + succinate + CO2. It participates in secondary metabolite biosynthesis. In terms of biological role, 2-oxoglutarate-Fe(II) type oxidoreductase; part of the gene cluster that mediates the biosynthesis of pyrrolopyrazines, secondary metabolites showing insecticidal activity. Within the pathway, ppzD converts L-proline into trans-4-hydroxy-L-proline as a major product, yielding a key precursor for peramine biosynthesis. PpzD is also able to convert L-proline into trans-3-hydroxy-L-proline. The single multifunctional NRPS ppzA is sufficient to produce peramine via condensation of 1-pyrroline-5-carboxylate and arginine, N-methylation of the alpha-amino group of arginine and reduction of the thioester and the cyclization to form an iminium ion resulting in release from the peptide synthetase. Deprotonation of this intermediate and oxidation of the pyrroline ring would give rise to peramine. In Epichloe species that produce only peramine, the peramine synthetase gene is not localized in a gene cluster, in contrast to Metarhizium species that contain additional pyrrolopyrazine biosynthesis genes. The 2-oxoglutarate-Fe(II) type oxidoreductase ppzC hydroxylates peramine to yield the newly identified compound 8-hydroxyperamine whereas ppzD converts L-proline into trans-4-hydroxy-L-proline, a precursor of peramine biosynthesis. The chain is 2-oxoglutarate-Fe(II) type oxidoreductase ppzD from Metarhizium rileyi (strain RCEF 4871) (Nomuraea rileyi).